The primary structure comprises 483 residues: Succinate semialdehyde dehydrogenase (483 aa).

NAD(+)-binding positions include 156–157 (WN), 180–183 (KPAP), and 233–234 (GS). The active-site Proton acceptor is Glu-255. Leu-256 is a binding site for NAD(+). Cys-289 acts as the Nucleophile in catalysis. Glu-386 is a binding site for NAD(+).

This sequence belongs to the aldehyde dehydrogenase family. In terms of assembly, homotetramer.

It carries out the reaction succinate semialdehyde + NAD(+) + H2O = succinate + NADH + 2 H(+). In terms of biological role, involved in the degradation of the pyridine ring of trigonelline (TG; N-methylnicotinate) into succinate and methylamine as carbon and nitrogen sources, respectively. Catalyzes the NAD(+)-dependent oxidation of succinate semialdehyde to succinate. This Acinetobacter baylyi (strain ATCC 33305 / BD413 / ADP1) protein is Succinate semialdehyde dehydrogenase.